The chain runs to 157 residues: SsrA-binding protein (157 aa).

Belongs to the SmpB family.

The protein resides in the cytoplasm. Required for rescue of stalled ribosomes mediated by trans-translation. Binds to transfer-messenger RNA (tmRNA), required for stable association of tmRNA with ribosomes. tmRNA and SmpB together mimic tRNA shape, replacing the anticodon stem-loop with SmpB. tmRNA is encoded by the ssrA gene; the 2 termini fold to resemble tRNA(Ala) and it encodes a 'tag peptide', a short internal open reading frame. During trans-translation Ala-aminoacylated tmRNA acts like a tRNA, entering the A-site of stalled ribosomes, displacing the stalled mRNA. The ribosome then switches to translate the ORF on the tmRNA; the nascent peptide is terminated with the 'tag peptide' encoded by the tmRNA and targeted for degradation. The ribosome is freed to recommence translation, which seems to be the essential function of trans-translation. The sequence is that of SsrA-binding protein from Chromohalobacter salexigens (strain ATCC BAA-138 / DSM 3043 / CIP 106854 / NCIMB 13768 / 1H11).